Here is a 481-residue protein sequence, read N- to C-terminus: Glucan endo-1,3-beta-glucosidase 8 (481 aa).

The first 33 residues, 1–33, serve as a signal peptide directing secretion; it reads MSNLLALVVGFVIVIGHLGILVNGLGVNWGTMA. Residues Asn-99 and Asn-110 are each glycosylated (N-linked (GlcNAc...) asparagine). The Proton donor role is filled by Glu-119. Residues Asn-126 and Asn-131 are each glycosylated (N-linked (GlcNAc...) asparagine). Glu-265 functions as the Nucleophile in the catalytic mechanism. Cys-367 and Cys-428 form a disulfide bridge. Residues Asn-409 and Asn-440 are each glycosylated (N-linked (GlcNAc...) asparagine). The GPI-anchor amidated serine moiety is linked to residue Ser-455. The propeptide at 456-481 is removed in mature form; the sequence is SASSFSCSSYSLVVLIVWFLLSGMMF.

It belongs to the glycosyl hydrolase 17 family. In terms of processing, contains two additional disulfide bonds.

It is found in the secreted. The protein localises to the cell wall. Its subcellular location is the cell membrane. The enzyme catalyses Hydrolysis of (1-&gt;3)-beta-D-glucosidic linkages in (1-&gt;3)-beta-D-glucans.. The protein is Glucan endo-1,3-beta-glucosidase 8 of Arabidopsis thaliana (Mouse-ear cress).